The sequence spans 548 residues: 2-succinyl-5-enolpyruvyl-6-hydroxy-3-cyclohexene-1-carboxylate synthase (548 aa).

This sequence belongs to the TPP enzyme family. MenD subfamily. Homodimer. Requires Mg(2+) as cofactor. It depends on Mn(2+) as a cofactor. The cofactor is thiamine diphosphate.

It carries out the reaction isochorismate + 2-oxoglutarate + H(+) = 5-enolpyruvoyl-6-hydroxy-2-succinyl-cyclohex-3-ene-1-carboxylate + CO2. Its pathway is quinol/quinone metabolism; 1,4-dihydroxy-2-naphthoate biosynthesis; 1,4-dihydroxy-2-naphthoate from chorismate: step 2/7. The protein operates within quinol/quinone metabolism; menaquinone biosynthesis. Catalyzes the thiamine diphosphate-dependent decarboxylation of 2-oxoglutarate and the subsequent addition of the resulting succinic semialdehyde-thiamine pyrophosphate anion to isochorismate to yield 2-succinyl-5-enolpyruvyl-6-hydroxy-3-cyclohexene-1-carboxylate (SEPHCHC). This is 2-succinyl-5-enolpyruvyl-6-hydroxy-3-cyclohexene-1-carboxylate synthase from Mycolicibacterium vanbaalenii (strain DSM 7251 / JCM 13017 / BCRC 16820 / KCTC 9966 / NRRL B-24157 / PYR-1) (Mycobacterium vanbaalenii).